A 167-amino-acid chain; its full sequence is Ribosome maturation factor RimM (167 aa).

Residues Glu94–Leu165 form the PRC barrel domain.

The protein belongs to the RimM family. In terms of assembly, binds ribosomal protein uS19.

It is found in the cytoplasm. Functionally, an accessory protein needed during the final step in the assembly of 30S ribosomal subunit, possibly for assembly of the head region. Essential for efficient processing of 16S rRNA. May be needed both before and after RbfA during the maturation of 16S rRNA. It has affinity for free ribosomal 30S subunits but not for 70S ribosomes. This Staphylococcus epidermidis (strain ATCC 12228 / FDA PCI 1200) protein is Ribosome maturation factor RimM.